A 307-amino-acid chain; its full sequence is Cuticle collagen 36 (307 aa).

Disordered stretches follow at residues 76-102 (TRSR…GGPT) and 116-307 (QQGP…PPGY). Residues 86–102 (EGSGSGGSGSGGYGGPT) show a composition bias toward gly residues. Triple-helical region stretches follow at residues 89 to 105 (GSGG…TGAG), 118 to 150 (GPAG…EGSI), 167 to 187 (GPQG…KGKS), 194 to 226 (GKNG…PGRV), 231 to 257 (GAAG…AGLT), and 260 to 295 (GGQG…EGSC). Residues 157–168 (PSEPCIICPPGP) are compositionally biased toward pro residues. Residues 186–196 (KSQERAADGKN) are compositionally biased toward basic and acidic residues. Residues 202-220 (IGPPGPPGGVGEPGPPGPA) are compositionally biased toward pro residues. The span at 231 to 242 (GAAGPAGPRGVK) shows a compositional bias: low complexity. Residues 258 to 278 (EIGGQGPPGDAGGPGPVGGQG) show a composition bias toward gly residues. A compositionally biased stretch (pro residues) spans 279–288 (PPGPQGPQGP).

It belongs to the cuticular collagen family. Collagen polypeptide chains are complexed within the cuticle by disulfide bonds and other types of covalent cross-links.

Functionally, nematode cuticles are composed largely of collagen-like proteins. The cuticle functions both as an exoskeleton and as a barrier to protect the worm from its environment. This Caenorhabditis elegans protein is Cuticle collagen 36 (col-36).